Reading from the N-terminus, the 435-residue chain is GTPase Der (435 aa).

2 consecutive EngA-type G domains span residues alanine 2–glycine 167 and proline 178–cysteine 351. GTP contacts are provided by residues glycine 8 to serine 15, aspartate 55 to valine 59, asparagine 118 to glutamate 121, glycine 184 to serine 191, aspartate 231 to methionine 235, and asparagine 297 to aspartate 300. In terms of domain architecture, KH-like spans arginine 352–arginine 435.

It belongs to the TRAFAC class TrmE-Era-EngA-EngB-Septin-like GTPase superfamily. EngA (Der) GTPase family. As to quaternary structure, associates with the 50S ribosomal subunit.

Functionally, GTPase that plays an essential role in the late steps of ribosome biogenesis. The polypeptide is GTPase Der (Pseudothermotoga lettingae (strain ATCC BAA-301 / DSM 14385 / NBRC 107922 / TMO) (Thermotoga lettingae)).